The following is a 257-amino-acid chain: Ubiquinone biosynthesis O-methyltransferase (257 aa).

The S-adenosyl-L-methionine site is built by R43, G77, D98, and M144.

It belongs to the methyltransferase superfamily. UbiG/COQ3 family.

It carries out the reaction a 3-demethylubiquinol + S-adenosyl-L-methionine = a ubiquinol + S-adenosyl-L-homocysteine + H(+). The enzyme catalyses a 3-(all-trans-polyprenyl)benzene-1,2-diol + S-adenosyl-L-methionine = a 2-methoxy-6-(all-trans-polyprenyl)phenol + S-adenosyl-L-homocysteine + H(+). Its pathway is cofactor biosynthesis; ubiquinone biosynthesis. Its function is as follows. O-methyltransferase that catalyzes the 2 O-methylation steps in the ubiquinone biosynthetic pathway. In Psychrobacter cryohalolentis (strain ATCC BAA-1226 / DSM 17306 / VKM B-2378 / K5), this protein is Ubiquinone biosynthesis O-methyltransferase.